We begin with the raw amino-acid sequence, 362 residues long: Atypical chemokine receptor 3 (362 aa).

Over 1-47 (MDVHLFDYVEPGNYSDINWPCNSSDCIVVDTVQCPAMPNKNVLLYTL) the chain is Extracellular. N-linked (GlcNAc...) asparagine glycosylation is found at N13 and N22. The chain crosses the membrane as a helical span at residues 48–68 (SFIYIFIFVIGMIANSVVVWV). At 69-81 (NIQAKTTGYDTHC) the chain is on the cytoplasmic side. The helical transmembrane segment at 82–102 (YILNLAIADLWVVITIPVWVV) threads the bilayer. Residues 103–118 (SLVQHNQWPMGELTCK) are Extracellular-facing. C117 and C196 form a disulfide bridge. The helical transmembrane segment at 119 to 139 (ITHLIFSINLFGSIFFLACMS) threads the bilayer. Residues 140-162 (VDRYLSITYFTSTSSYKKKMVRR) are Cytoplasmic-facing. The helical transmembrane segment at 163–183 (VVCVLVWLLAFFVSLPDTYYL) threads the bilayer. The Extracellular segment spans residues 184-213 (KTVTSASNNETYCRSFYPEHSIKEWLIGME). Residues 214-234 (LVSVILGFAVPFTIIAIFYFL) traverse the membrane as a helical segment. At 235 to 252 (LARAMSASGDQEKHSSRK) the chain is on the cytoplasmic side. The helical transmembrane segment at 253 to 273 (IIFSYVVVFLVCWLPYHFVVL) threads the bilayer. Residues 274–296 (LDIFSILHYIPFTCQLENVLFTA) lie on the Extracellular side of the membrane. The helical transmembrane segment at 297–319 (LHVTQCLSLVHCCVNPVLYSFIN) threads the bilayer. Residues 320-362 (RNYRYELMKAFIFKYSAKTGLTKLIDASRVSETEYSALEQNTK) lie on the Cytoplasmic side of the membrane. The tract at residues 324-362 (YELMKAFIFKYSAKTGLTKLIDASRVSETEYSALEQNTK) is C-terminal cytoplasmic tail. Residues S347, S350, and S355 each carry the phosphoserine modification.

The protein belongs to the G-protein coupled receptor 1 family. Atypical chemokine receptor subfamily. In terms of assembly, homodimer. Can form heterodimers with CXCR4; heterodimerization may regulate CXCR4 signaling activity. Interacts with ARRB1 and ARRB2. The Ser/Thr residues in the C-terminal cytoplasmic tail may be phosphorylated. Post-translationally, ubiquitinated at the Lys residues in its C-terminal cytoplasmic tail and is essential for correct trafficking from and to the cell membrane. Deubiquitinated by CXCL12-stimulation in a reversible manner. As to expression, expressed in vascular smooth muscle cells (at protein level). In brain, expressed in blood vessels, pyramidal cells in hippocampal subfield CA3, mature dentate gyrus granule cells, ventricle walls, olfactory bulb, accumbens shell, supraoptic, lateroanterior and ventromedial hypothalamic nuclei, medial region of thalamus, and motor nuclei, central gray and raphe magnus nucleus of brain stem. Detected in primary neurons, GABAergic neurons, astrocytes, cerebral cortex, ventral striatum and choroid plexus. Not detected in mesencephalon.

The protein resides in the cell membrane. The protein localises to the early endosome. It is found in the recycling endosome. In terms of biological role, atypical chemokine receptor that controls chemokine levels and localization via high-affinity chemokine binding that is uncoupled from classic ligand-driven signal transduction cascades, resulting instead in chemokine sequestration, degradation, or transcytosis. Also known as interceptor (internalizing receptor) or chemokine-scavenging receptor or chemokine decoy receptor. Acts as a receptor for chemokines CXCL11 and CXCL12/SDF1. Chemokine binding does not activate G-protein-mediated signal transduction but instead induces beta-arrestin recruitment, leading to ligand internalization and activation of MAPK signaling pathway. Required for regulation of CXCR4 protein levels in migrating interneurons, thereby adapting their chemokine responsiveness. In glioma cells, transduces signals via MEK/ERK pathway, mediating resistance to apoptosis. Promotes cell growth and survival. Not involved in cell migration, adhesion or proliferation of normal hematopoietic progenitors but activated by CXCL11 in malignant hemapoietic cells, leading to phosphorylation of ERK1/2 (MAPK3/MAPK1) and enhanced cell adhesion and migration. Plays a regulatory role in CXCR4-mediated activation of cell surface integrins by CXCL12. Required for heart valve development. Atypical chemokine receptor that controls chemokine levels and localization via high-affinity chemokine binding that is uncoupled from classic ligand-driven signal transduction cascades, resulting instead in chemokine sequestration, degradation, or transcytosis. Also known as interceptor (internalizing receptor) or chemokine-scavenging receptor or chemokine decoy receptor. Acts as a receptor for chemokines CXCL11 and CXCL12/SDF1. Chemokine binding does not activate G-protein-mediated signal transduction but instead induces beta-arrestin recruitment, leading to ligand internalization and activation of MAPK signaling pathway. Required for regulation of CXCR4 protein levels in migrating interneurons, thereby adapting their chemokine responsiveness. In glioma cells, transduces signals via MEK/ERK pathway, mediating resistance to apoptosis. Promotes cell growth and survival. Not involved in cell migration, adhesion or proliferation of normal hematopoietic progenitors but activated by CXCL11 in malignant hemapoietic cells, leading to phosphorylation of ERK1/2 (MAPK3/MAPK1) and enhanced cell adhesion and migration. Plays a regulatory role in CXCR4-mediated activation of cell surface integrins by CXCL12. Required for heart valve development. Regulates axon guidance in the oculomotor system through the regulation of CXCL12 levels. This is Atypical chemokine receptor 3 from Rattus norvegicus (Rat).